An 88-amino-acid chain; its full sequence is Small ribosomal subunit protein bS16c (88 aa).

Belongs to the bacterial ribosomal protein bS16 family.

It localises to the plastid. It is found in the chloroplast. In Gossypium hirsutum (Upland cotton), this protein is Small ribosomal subunit protein bS16c.